A 543-amino-acid chain; its full sequence is Hydroxylamine reductase (543 aa).

[4Fe-4S] cluster-binding residues include cysteine 5, cysteine 8, cysteine 17, and cysteine 23. Hybrid [4Fe-2O-2S] cluster contacts are provided by histidine 236, glutamate 260, cysteine 304, cysteine 398, cysteine 426, cysteine 451, glutamate 486, and lysine 488. Cysteine 398 carries the cysteine persulfide modification.

Belongs to the HCP family. Requires [4Fe-4S] cluster as cofactor. Hybrid [4Fe-2O-2S] cluster serves as cofactor.

The protein resides in the cytoplasm. The enzyme catalyses A + NH4(+) + H2O = hydroxylamine + AH2 + H(+). Its function is as follows. Catalyzes the reduction of hydroxylamine to form NH(3) and H(2)O. This chain is Hydroxylamine reductase, found in Bacteroides fragilis (strain YCH46).